Reading from the N-terminus, the 654-residue chain is Probable Xaa-Pro aminopeptidase P (654 aa).

The Mn(2+) site is built by aspartate 451, aspartate 462, glutamate 560, and glutamate 574.

Belongs to the peptidase M24B family. Mn(2+) serves as cofactor.

The enzyme catalyses Release of any N-terminal amino acid, including proline, that is linked to proline, even from a dipeptide or tripeptide.. In terms of biological role, catalyzes the removal of a penultimate prolyl residue from the N-termini of peptides. This is Probable Xaa-Pro aminopeptidase P (ampp) from Botryotinia fuckeliana (strain B05.10) (Noble rot fungus).